The following is a 167-amino-acid chain: Phosphopantetheine adenylyltransferase (167 aa).

Thr10 provides a ligand contact to substrate. ATP is bound by residues 10-11 and His18; that span reads TF. Substrate-binding residues include Lys42, Leu75, and Arg89. ATP contacts are provided by residues 90 to 92, Glu100, and 125 to 131; these read GVR and YTYVASS.

The protein belongs to the bacterial CoaD family. In terms of assembly, homohexamer. Mg(2+) serves as cofactor.

Its subcellular location is the cytoplasm. The catalysed reaction is (R)-4'-phosphopantetheine + ATP + H(+) = 3'-dephospho-CoA + diphosphate. The protein operates within cofactor biosynthesis; coenzyme A biosynthesis; CoA from (R)-pantothenate: step 4/5. In terms of biological role, reversibly transfers an adenylyl group from ATP to 4'-phosphopantetheine, yielding dephospho-CoA (dPCoA) and pyrophosphate. The sequence is that of Phosphopantetheine adenylyltransferase from Chlorobium phaeobacteroides (strain DSM 266 / SMG 266 / 2430).